A 458-amino-acid chain; its full sequence is Macrophage scavenger receptor types I and II (458 aa).

Topologically, residues 1-55 (MTKEMTENQRLCPHEQEDADCSSESVKFDARSMTASLPHSTKNGPSLQEKLKSFK) are cytoplasmic. Phosphoserine occurs at positions 32 and 36. The helical; Signal-anchor for type II membrane protein transmembrane segment at 56 to 78 (AALIALYLLVFAVLIPVVGIVTA) threads the bilayer. The spacer stretch occupies residues 79-114 (QLLNWEMKNCLVCSLNTSDTSQGPMEKENTSKVEMR). The Extracellular portion of the chain corresponds to 79 to 458 (QLLNWEMKNC…SEDAGVTCTS (380 aa)). N-linked (GlcNAc...) asparagine glycans are attached at residues N94, N107, N147, N188, N253, and N271. A coiled-coil region spans residues 209 to 259 (TAKQQEDISKLEERVYKVSAEVQSVKEEQAHVEQEVKQEVRVLNNITNDLR). Residues 272–357 (ITFIQGPPGP…VGGSTPLKTV (86 aa)) form a disordered region. The Collagen-like domain occupies 277–350 (GPPGPQGEKG…QKGEKGSVGG (74 aa)). Residues 316-325 (GFPGGRGNPG) are compositionally biased toward gly residues. The segment covering 326–339 (APGKPGRSGSPGPK) has biased composition (low complexity). The SRCR domain maps to 357–457 (VRLVGGSGAH…HSEDAGVTCT (101 aa)). Disulfide bonds link C382/C446, C395/C456, and C426/C436.

Homotrimer. Interacts with MYO18A.

It is found in the membrane. Its function is as follows. Membrane glycoproteins implicated in the pathologic deposition of cholesterol in arterial walls during atherogenesis. Two types of receptor subunits exist. These receptors mediate the endocytosis of a diverse group of macromolecules, including modified low density lipoproteins (LDL). This Mus musculus (Mouse) protein is Macrophage scavenger receptor types I and II (Msr1).